Here is a 258-residue protein sequence, read N- to C-terminus: MIVLPRRLSDEVADRVRALIDEKNLEAGMKLPAERQLAMQLGVSRNSLREALAKLVSEGVLLSRRGGGTFIRWRHDTWSEQNIVQPLKTLMADDPDYSFDILEARYAIEASTAWHAAMRATPGDKEKIQLCFEATLSEDPDIASQADVRFHLAIAEASHNIVLLQTMRGFFDVLQSSVKHSRQRMYLVPPVFSQLTEQHQAVIDAIFAGDADGARKAMMAHLSFVHTTMKRFDEDQARHARITRLPGEHNEHSREKNA.

In terms of domain architecture, HTH gntR-type spans 6 to 74 (RRLSDEVADR…RGGGTFIRWR (69 aa)). Residues 34–53 (ERQLAMQLGVSRNSLREALA) constitute a DNA-binding region (H-T-H motif).

May be a regulatory protein for the LCT genes. In Escherichia coli (strain K12), this protein is Putative L-lactate dehydrogenase operon regulatory protein (lldR).